A 289-amino-acid polypeptide reads, in one-letter code: (3R)-3-[(carboxymethyl)amino]fatty acid oxygenase/decarboxylase (289 aa).

Positions 65, 70, and 93 each coordinate a (3R)-3-[(carboxymethyl)amino]fatty acid. 2 residues coordinate Fe(2+): H97 and D99. Positions 100 and 158 each coordinate a (3R)-3-[(carboxymethyl)amino]fatty acid. H260 serves as a coordination point for Fe(2+). H264 serves as a coordination point for 2-oxoglutarate. Position 275 (R275) interacts with a (3R)-3-[(carboxymethyl)amino]fatty acid.

This sequence belongs to the TfdA dioxygenase family. It depends on Fe(2+) as a cofactor.

The enzyme catalyses a (3R)-3-[(carboxymethyl)amino]fatty acid + 2 2-oxoglutarate + 2 O2 = a (3R)-3-isocyanyl-fatty acid + 2 succinate + 3 CO2 + 2 H2O. It carries out the reaction a (3R)-3-[(carboxymethyl)amino]fatty acid + 2-oxoglutarate + O2 = a (3R)-3-{[carboxy(hydroxy)methyl]amino}fatty acid + succinate + CO2. It catalyses the reaction a (3R)-3-{[carboxy(hydroxy)methyl]amino}fatty acid + 2-oxoglutarate + O2 = a (3R)-3-isocyanyl-fatty acid + succinate + 2 CO2 + 2 H2O. Involved in the biosynthesis of a unique class of isonitrile lipopeptides (INLPs) that seem to play a role in metal acquisition. Catalyzes the conversion of (3R)-3-[(carboxymethyl)amino]fatty acids to (3R)-3-isocyanyl-fatty acids through an oxidative decarboxylation mechanism, thereby generating the isonitrile group of INLPs. This chain is (3R)-3-[(carboxymethyl)amino]fatty acid oxygenase/decarboxylase, found in Mycobacterium bovis (strain ATCC BAA-935 / AF2122/97).